The sequence spans 420 residues: MSNTQKQLALAKAAKKSVNTADTEEKNRALLAMADSLEAATADILAANRQDLEAAAGNIPESMTDRLLLDGKRICAMADGIRAVAALPNPVGEILETSTLPNGLEIVKKRVAMGVIGIIYESRPNVTSDAAALALKSGSAVVLRSGKDAFQSARAIVAALKTGLAQTRIDPDALQLIEDTGRESSYEMMRAKDYLDLLIPRGGAGLIRAVVENAVVPVIETGTGIVHIYIDKDADWDKALRIVYNAKTSRPSVCNSMEVLLVHEDIAADFLPKLERLLVRDRIEAGLPPIRFRLDPQAARHIGGEAAGADDFDTEFLDYILAVKTVASVEEAVWHIETHSTHHSDGIVTENRHAADYFTTHIDSAAVYVNASTRFTDGGEFGLGCEMGISTQKLHARGPMGLKELTSYKYIVQGTGQVRE.

The protein belongs to the gamma-glutamyl phosphate reductase family.

It localises to the cytoplasm. The enzyme catalyses L-glutamate 5-semialdehyde + phosphate + NADP(+) = L-glutamyl 5-phosphate + NADPH + H(+). It participates in amino-acid biosynthesis; L-proline biosynthesis; L-glutamate 5-semialdehyde from L-glutamate: step 2/2. Catalyzes the NADPH-dependent reduction of L-glutamate 5-phosphate into L-glutamate 5-semialdehyde and phosphate. The product spontaneously undergoes cyclization to form 1-pyrroline-5-carboxylate. This chain is Gamma-glutamyl phosphate reductase, found in Neisseria meningitidis serogroup B (strain ATCC BAA-335 / MC58).